Consider the following 722-residue polypeptide: Ras and EF-hand domain-containing protein (722 aa).

2 consecutive EF-hand domains span residues 5-39 (DELS…ELKV) and 39-74 (VSPS…ARGL). A compositionally biased stretch (basic and acidic residues) spans 75–84 (HMPEGKKDVE). A disordered region spans residues 75–109 (HMPEGKKDVEQGEPPKSPSTPDKEEKPEETSSPAW). The stretch at 156 to 335 (REIRLQSTEM…ANRKLHDSND (180 aa)) forms a coiled coil. The segment covering 355 to 374 (INTSPGSTISRNSPKLTRCT) has biased composition (polar residues). Disordered stretches follow at residues 355-384 (INTS…PRSS) and 439-491 (FHRS…SGAS). Low complexity predominate over residues 480-491 (SNPVSRSSSGAS). GTP is bound by residues 532-537 (AVGKSS), 635-638 (NKAD), and 672-673 (AK).

The protein belongs to the small GTPase superfamily. Rab family. Homodimer.

It is found in the cytoplasm. Its subcellular location is the perinuclear region. Binds predominantly GDP, and also GTP. In Xenopus tropicalis (Western clawed frog), this protein is Ras and EF-hand domain-containing protein (rasef).